The primary structure comprises 847 residues: Alpha-glucuronidase (847 aa).

Residues 1-19 (MVIRSLLLLLLAAIVPVFA) form the signal peptide. Residues N52, N238, N321, N353, N586, N692, N740, and N767 are each glycosylated (N-linked (GlcNAc...) asparagine).

It belongs to the glycosyl hydrolase 67 family.

The protein localises to the secreted. It catalyses the reaction an alpha-D-glucuronoside + H2O = D-glucuronate + an alcohol. Its function is as follows. Releases 4-O-methylglucuronic acid from xylan. This is Alpha-glucuronidase from Hypocrea jecorina (Trichoderma reesei).